A 467-amino-acid polypeptide reads, in one-letter code: Serum response factor homolog B (467 aa).

Over residues 1–15 (MELNMNQYDNIESND) the composition is skewed to polar residues. 3 disordered regions span residues 1 to 38 (MELN…KSGR), 115 to 245 (NTPD…NNLT), and 301 to 467 (IQNI…PSDL). In terms of domain architecture, MADS-box spans 36 to 96 (SGRRKINIEF…GHVYTFATPK (61 aa)). Positions 128–205 (NNNNGNNSNN…NNNNNNNNNN (78 aa)) are enriched in low complexity. Residues 206–220 (CKEEQNMNIPNERKS) are compositionally biased toward basic and acidic residues. Low complexity-rich tracts occupy residues 222 to 245 (NNIN…NNLT), 301 to 334 (IQNI…SNNI), 347 to 392 (GSNS…NSNN), and 401 to 440 (PSPI…YGGY). Over residues 442–467 (QPFSRNYPLQSNIATNSTVSKAPSDL) the composition is skewed to polar residues.

The protein localises to the nucleus. This is Serum response factor homolog B (srfB) from Dictyostelium discoideum (Social amoeba).